The primary structure comprises 712 residues: Dipeptidyl-peptidase 7 (712 aa).

Positions 1–23 (MQMKLKSILLGAALLLGASGVAK) are cleaved as a signal peptide. The Charge relay system role is filled by His-89. Residues 136 to 173 (TDKVEGQLKGITDEMERLRKAQEVCQELAKKENADENQ) are a coiled coil. Residues Asp-225 and Ser-648 each act as charge relay system in the active site.

The protein belongs to the peptidase S46 family.

Its subcellular location is the cell outer membrane. With respect to regulation, is inhibited in vitro by typical serine protease inhibitors like diisopropyl fluorophosphate, Pefablock, and 3,4-dichloroisocoumarin, but not by typical cysteine class inhibitors such as E-64 or iododoacetic acid. Catalyzes the removal of dipeptides from the N-terminus of oligopeptides. Shows a broad specificity for both aliphatic and aromatic residues in the P1 position, with glycine or proline being not acceptable in this position. Most potently cleaves the synthetic substrate Met-Leu-methylcoumaryl-7-amide (Met-Leu-MCA), Leu-Arg-MCA and Lys-Ala-MCA to a lesser extent. Is likely involved in amino acid metabolism and bacterial growth of asaccharolytic P.gingivalis, that utilizes amino acids from extracellular proteinaceous nutrients as energy and carbon sources. This chain is Dipeptidyl-peptidase 7, found in Porphyromonas gingivalis (strain ATCC 33277 / DSM 20709 / CIP 103683 / JCM 12257 / NCTC 11834 / 2561).